We begin with the raw amino-acid sequence, 184 residues long: Major fimbrial subunit (184 aa).

The signal sequence occupies residues Met1 to Ala22. A disulfide bridge links Cys49 with Cys88.

The protein belongs to the fimbrial protein family.

Its subcellular location is the fimbrium. Its function is as follows. Major structural component of PMF fimbriae. The polypeptide is Major fimbrial subunit (pmfA) (Proteus mirabilis (strain HI4320)).